The sequence spans 443 residues: Mitochondrial distribution and morphology protein 10 (443 aa).

It belongs to the MDM10 family. In terms of assembly, component of the ER-mitochondria encounter structure (ERMES) or MDM complex, composed of MMM1, MDM10, MDM12 and MDM34. Associates with the mitochondrial outer membrane sorting assembly machinery SAM(core) complex.

The protein localises to the mitochondrion outer membrane. Functionally, component of the ERMES/MDM complex, which serves as a molecular tether to connect the endoplasmic reticulum and mitochondria. Components of this complex are involved in the control of mitochondrial shape and protein biogenesis and may function in phospholipid exchange. MDM10 is involved in the late assembly steps of the general translocase of the mitochondrial outer membrane (TOM complex). Functions in the TOM40-specific route of the assembly of outer membrane beta-barrel proteins, including the association of TOM40 with the receptor TOM22 and small TOM proteins. Can associate with the SAM(core) complex as well as the MDM12-MMM1 complex, both involved in late steps of the major beta-barrel assembly pathway, that is responsible for biogenesis of all outer membrane beta-barrel proteins. May act as a switch that shuttles between both complexes and channels precursor proteins into the TOM40-specific pathway. Plays a role in mitochondrial morphology and in the inheritance of mitochondria. In Pyricularia oryzae (strain 70-15 / ATCC MYA-4617 / FGSC 8958) (Rice blast fungus), this protein is Mitochondrial distribution and morphology protein 10.